A 596-amino-acid polypeptide reads, in one-letter code: Clathrin heavy chain linker domain-containing protein 1 (596 aa).

The stretch at 129 to 241 (QLEAKMRIIE…RDIAENLKKD (113 aa)) forms a coiled coil.

The chain is Clathrin heavy chain linker domain-containing protein 1 (Clhc1) from Mus musculus (Mouse).